Reading from the N-terminus, the 548-residue chain is Chaperonin GroEL (548 aa).

ATP is bound by residues 30-33 (TLGP), Lys-51, 87-91 (DGTTT), Gly-415, 479-481 (NAA), and Asp-495.

This sequence belongs to the chaperonin (HSP60) family. As to quaternary structure, forms a cylinder of 14 subunits composed of two heptameric rings stacked back-to-back. Interacts with the co-chaperonin GroES.

It is found in the cytoplasm. The enzyme catalyses ATP + H2O + a folded polypeptide = ADP + phosphate + an unfolded polypeptide.. Together with its co-chaperonin GroES, plays an essential role in assisting protein folding. The GroEL-GroES system forms a nano-cage that allows encapsulation of the non-native substrate proteins and provides a physical environment optimized to promote and accelerate protein folding. This Escherichia fergusonii (strain ATCC 35469 / DSM 13698 / CCUG 18766 / IAM 14443 / JCM 21226 / LMG 7866 / NBRC 102419 / NCTC 12128 / CDC 0568-73) protein is Chaperonin GroEL.